Consider the following 146-residue polypeptide: Ferric uptake regulation protein 2 (146 aa).

Zn(2+) is bound by residues C96 and C99.

Belongs to the Fur family.

The protein resides in the cytoplasm. Acts as a global negative controlling element, employing Fe(2+) as a cofactor to bind the operator of the repressed genes. The polypeptide is Ferric uptake regulation protein 2 (fur2) (Mycolicibacterium fortuitum (Mycobacterium fortuitum)).